Reading from the N-terminus, the 642-residue chain is Triacylglycerol lipase 3 (642 aa).

The region spanning 204-392 (LILQGGSLFG…NEIEPFLNIN (189 aa)) is the PNPLA domain. The GXSXG motif lies at 235–239 (GSSMG). S237 acts as the Nucleophile in catalysis. Positions 298–303 (HGYSQD) match the HXXXXD acyltransferase motif motif. E403 serves as the catalytic Proton acceptor. Residues 471-481 (RKTQRSSSQSP) are compositionally biased toward polar residues. The segment at 471-502 (RKTQRSSSQSPIKAGTVEDLEPEPLMSPVPPS) is disordered.

The protein resides in the lipid droplet. The catalysed reaction is a triacylglycerol + H2O = a diacylglycerol + a fatty acid + H(+). It catalyses the reaction 1,2,3-tri-(9Z-octadecenoyl)-glycerol + H2O = di-(9Z)-octadecenoylglycerol + (9Z)-octadecenoate + H(+). The enzyme catalyses di-(9Z)-octadecenoylglycerol + H2O = (9Z-octadecenoyl)-glycerol + (9Z)-octadecenoate + H(+). It carries out the reaction a 1-acyl-sn-glycero-3-phosphoethanolamine + (9Z)-octadecenoyl-CoA = 1-acyl-2-(9Z)-octadecenoyl-sn-glycero-3-phosphoethanolamine + CoA. The catalysed reaction is a 1-acyl-sn-glycero-3-phosphoethanolamine + hexadecanoyl-CoA = 1-acyl-2-hexadecanoyl-sn-glycero-3-phosphoethanolamine + CoA. With respect to regulation, loses its lipolytic activity in cells lacking nonpolar lipids. In terms of biological role, lipid particle-localized triacylglycerol (TAG) lipase. The lipid droplet/particle is a lipid storage compartment which serves as a depot of energy and building blocks for membrane lipid biosynthesis. Involved in the mobilization of the non-polar storage lipids triacylglycerols (TAGs) from lipid particles by hydrolysis of TAGs, releasing and supplying specific fatty acids to the appropriate metabolic pathways. Also catalyzes the acylation of lysophosphatidic acid (LPA). Important for efficient sporulation, but rather through its acyltransferase than lipase activity. This Saccharomyces cerevisiae (strain ATCC 204508 / S288c) (Baker's yeast) protein is Triacylglycerol lipase 3 (TGL3).